A 133-amino-acid polypeptide reads, in one-letter code: Peptide methionine sulfoxide reductase MsrB (133 aa).

A MsrB domain is found at 8 to 130 (LEEWRAMLDP…NSVCLDFKPR (123 aa)). Cys47, Cys50, Cys96, and Cys99 together coordinate Zn(2+). Cys119 acts as the Nucleophile in catalysis.

The protein belongs to the MsrB Met sulfoxide reductase family. Requires Zn(2+) as cofactor.

It catalyses the reaction L-methionyl-[protein] + [thioredoxin]-disulfide + H2O = L-methionyl-(R)-S-oxide-[protein] + [thioredoxin]-dithiol. The protein is Peptide methionine sulfoxide reductase MsrB of Pseudomonas putida (strain W619).